Consider the following 412-residue polypeptide: Multifunctional CCA protein (412 aa).

G8 and R11 together coordinate ATP. G8 and R11 together coordinate CTP. Mg(2+)-binding residues include D21 and D23. The ATP site is built by R91, R137, and R140. Positions 91, 137, and 140 each coordinate CTP. The HD domain maps to 228-329 (TGIHTLMTLS…VKLFDSIDAW (102 aa)).

The protein belongs to the tRNA nucleotidyltransferase/poly(A) polymerase family. Bacterial CCA-adding enzyme type 1 subfamily. Monomer. Can also form homodimers and oligomers. Mg(2+) is required as a cofactor. Ni(2+) serves as cofactor.

The catalysed reaction is a tRNA precursor + 2 CTP + ATP = a tRNA with a 3' CCA end + 3 diphosphate. It carries out the reaction a tRNA with a 3' CCA end + 2 CTP + ATP = a tRNA with a 3' CCACCA end + 3 diphosphate. Catalyzes the addition and repair of the essential 3'-terminal CCA sequence in tRNAs without using a nucleic acid template. Adds these three nucleotides in the order of C, C, and A to the tRNA nucleotide-73, using CTP and ATP as substrates and producing inorganic pyrophosphate. tRNA 3'-terminal CCA addition is required both for tRNA processing and repair. Also involved in tRNA surveillance by mediating tandem CCA addition to generate a CCACCA at the 3' terminus of unstable tRNAs. While stable tRNAs receive only 3'-terminal CCA, unstable tRNAs are marked with CCACCA and rapidly degraded. The protein is Multifunctional CCA protein of Escherichia coli O139:H28 (strain E24377A / ETEC).